The primary structure comprises 79 residues: Short neurotoxin 2 (79 aa).

An N-terminal signal peptide occupies residues 1–21 (MKTLLLTLVMVTIMCLDLGYT). 4 disulfides stabilise this stretch: C24–C41, C34–C59, C63–C71, and C72–C77.

The protein belongs to the three-finger toxin family. Short-chain subfamily. Type III alpha-neurotoxin sub-subfamily. Expressed by the venom gland.

Its subcellular location is the secreted. Its function is as follows. Binds with high affinity to muscle nicotinic acetylcholine receptor (nAChR) and hinders acetylcholine binding to the receptor, thereby impairing neuromuscular transmission. Competes with the binding of alpha-bungarotoxin on muscle AChR (from Torpedo) with an IC(50) of 0.30 uM. Causes muscle paralysis, spasms and increased respiration. This is Short neurotoxin 2 from Pseudonaja textilis (Eastern brown snake).